The primary structure comprises 503 residues: MEFPLYTTTLLCGVISSTLLLLLLNKLTTWEHIVPSKVPWIDRRSEPFGYLRAKCRSFFNMKENITEAYYAFNKEGRAAALAIAFGRPQIILPPKYIRWIIDQPESVLSIDPIHNEFHAFVRDGLVGDHLVQEVLRRELAGHLAHLTREMNEEIADSVESVLGVSKEWATVPLRDSMRIIIARISNRLFVGKELCRNEDYIRNAVGLGMAVMPQTLVQDLLPQLLKGPLSFATKLFTRITLAGLSGHLSPVVRQRIQDVQTAEKDQLPLELLTWMAQRALQRGESATSIEEKLIARIAMANLASIETTTNTITKCMEDMTALSNETGGYLELMRQEAHTVLEACNYSPIKADLEKLVHIENALKESLRLAVVFPGLIRQVTSRTGVTLDDGTHLPHGARISVAAYAIHRDDANWTDAARYDPSRHEKASLPMSRGSEQLLSFGLGKRACPGRFFVTDELKLLFAHILTKYEFKVIKPPVTKVGLLKELTMRGPQEQLVIRRVK.

Residues 8–24 (TTLLCGVISSTLLLLLL) traverse the membrane as a helical segment. Residues N64, N324, and N413 are each glycosylated (N-linked (GlcNAc...) asparagine). Heme is bound at residue C449.

Belongs to the cytochrome P450 family. Heme is required as a cofactor.

Its subcellular location is the membrane. Its pathway is antifungal biosynthesis. Its function is as follows. Cytochrome P450 monooxygenase; part of the gene cluster that mediates the biosynthesis of echinocandin B, a fungal lipidated cyclic hexapeptide that acts as an antifungal agent. Linoleoyl-AMP, produced by the fatty-acyl-AMP ligase ecdI, is transferred to the initiation carrier domain (T0) of ecdA. The linoleoyl-S-phosphopantetheinyl-T0 is sequentially extended with L-ornithine, L-threonine, L-proline, L-homotyrosine, L-threonine, and 4R-methyl-L-proline to form the linear hexapeptide. Thereafter, the terminal condensation (C7) performs macrocyclization of the NRPS product and the cyclic scaffold is released from ecdA. All six of the amino acid residues are hydroxylated, including 4R,5R-dihydroxy-L-ornithine, 4R-hydroxyl-L-proline, 3S,4S-dihydroxy-L-homotyrosine, and 3S-hydroxyl-4S-methyl-L-prolin. In the pathway, all the hydroxylation reactions are proposed to occur following completion of the cyclic peptide, so the unhydroxylated precursor produced by ecdA will undergo six rounds of hydroxylation. Five hydroxylase genes (ecdG, ecdH, ecdK, htyE and htyF) are embedded within the echinocandin B (ecd) and L-homotyrosine (hty) clusters. This is Cytochrome P450 monooxygenase ecdH from Aspergillus rugulosus (Emericella rugulosa).